The primary structure comprises 187 residues: Peroxisome assembly protein 22 (187 aa).

The helical transmembrane segment at 7–29 (NTFFGLAALGALGLGYSVYKSFI) threads the bilayer.

The protein belongs to the peroxin-22 family. In terms of assembly, interacts with PEX4.

The protein localises to the peroxisome membrane. In terms of biological role, involved in peroxisome biogenesis. In Komagataella pastoris (Yeast), this protein is Peroxisome assembly protein 22 (PEX22).